We begin with the raw amino-acid sequence, 265 residues long: Neuronal membrane glycoprotein M6-b (265 aa).

The chain crosses the membrane as a helical span at residues 31-51 (GGVPYASLVATILCFSGVALF). An N-linked (GlcNAc...) asparagine glycan is attached at asparagine 73. Helical transmembrane passes span 90–110 (VIYG…AEGF) and 136–156 (FVFL…FSAV). N-linked (GlcNAc...) asparagine glycosylation is present at asparagine 177. Residues 224–244 (LFIVACAGAGATVIALLIYMM) form a helical membrane-spanning segment. Phosphoserine is present on serine 257.

Belongs to the myelin proteolipid protein family. Interacts with SERT. In terms of tissue distribution, neurons and glia; cerebellar Bergmann glia, in glia within white matter tracts of the cerebellum and cerebrum, and in embryonic dorsal root ganglia.

It is found in the cell membrane. Functionally, may be involved in neural development. Involved in regulation of osteoblast function and bone formation. Involved in matrix vesicle release by osteoblasts; this function seems to involve maintenance of the actin cytoskeleton. May be involved in cellular trafficking of SERT and thereby in regulation of serotonin uptake. The chain is Neuronal membrane glycoprotein M6-b (GPM6B) from Homo sapiens (Human).